Here is a 123-residue protein sequence, read N- to C-terminus: MPTIKQLIRNARQPIRNVTKSPALRGCPQRRGTCTRVYTITPKKPNSALRKVARVRLTSGFEITAYIPGIGHNLQEHSVVLVRGGRVKDLPGVRYHIVRGTLDAVGVKDRQQGRSKYGVKKPK.

It belongs to the universal ribosomal protein uS12 family. Part of the 30S ribosomal subunit.

The protein localises to the plastid. It is found in the chloroplast. Its function is as follows. With S4 and S5 plays an important role in translational accuracy. Located at the interface of the 30S and 50S subunits. In Coffea arabica (Arabian coffee), this protein is Small ribosomal subunit protein uS12cz/uS12cy (rps12-A).